A 430-amino-acid chain; its full sequence is MTTLTLNTSLLSSRRILAAFSGGLDSTVLLHQLVLWRERHPDVTLRAIHIHHGLSPHADSWVRHCETVCERWQVPLVVKRVTLADNGLGIEAHAREARYRAFAQTLLPGEVLATAQHLDDQCETFLLALKRGSGPAGLSAMGERSPFAGTLLLRPLLRETRKTLEQWAVHHGLCWIEDESNQDDAYDRNFLRLRALPLLQQRWPHFPAAVARSATLCAEQERLLDELLASDLTDCITTEGTLRLSPLMSMSDVRRAAILRRWLAMRNAPMPSRDALERIWQEVALARDDASPCLRFGDHEIRRYQSQLWWIKSVAGQHETTVAWPVWQTPLALPAGLGTVQLVPGGELRRPREEESVSIRFKAPGLLHIVGRHGGRKLKKIWQEQGIPPWRRDTTPLLFYGETLIAAAGVFVTREGAAEDKEGVSLVWHA.

An ATP-binding site is contributed by 21–26; it reads SGGLDS.

Belongs to the tRNA(Ile)-lysidine synthase family.

It localises to the cytoplasm. The enzyme catalyses cytidine(34) in tRNA(Ile2) + L-lysine + ATP = lysidine(34) in tRNA(Ile2) + AMP + diphosphate + H(+). Ligates lysine onto the cytidine present at position 34 of the AUA codon-specific tRNA(Ile) that contains the anticodon CAU, in an ATP-dependent manner. Cytidine is converted to lysidine, thus changing the amino acid specificity of the tRNA from methionine to isoleucine. This Salmonella schwarzengrund (strain CVM19633) protein is tRNA(Ile)-lysidine synthase.